The primary structure comprises 134 residues: Calcitonin gene-related peptide 2 (134 aa).

The signal sequence occupies residues 1-26 (MDFWKFFPFLALSSMWVLCLASSLQA). A propeptide spanning residues 27 to 86 (APFRSALESSLDLGTLSDQEKHLLLAALIQDYEQKARKLEQEEQETEGSRKGSSSSVISQ) is cleaved from the precursor. The tract at residues 65–91 (LEQEEQETEGSRKGSSSSVISQKRSCN) is disordered. Low complexity predominate over residues 77 to 89 (KGSSSSVISQKRS). Cysteines 90 and 95 form a disulfide. Phe125 is modified (phenylalanine amide). A propeptide spanning residues 131 to 134 (DLRV) is cleaved from the precursor.

Belongs to the calcitonin family.

It is found in the secreted. CALCB/CGRP2 is a peptide hormone that induces vasodilation mediated by the CALCRL-RAMP1 receptor complex. Dilates a variety of vessels including the coronary, cerebral and systemic vasculature. Its abundance in the CNS also points toward a neurotransmitter or neuromodulator role. This is Calcitonin gene-related peptide 2 from Rattus norvegicus (Rat).